A 457-amino-acid polypeptide reads, in one-letter code: MGPTRPTPPRTPAVPLFAAVVRPLQAFLRLEAASGIVLLSCAVAALALANSPLSDEYRAFFDTTLGVRVGPLAAEFSLAMLVNDGLMTIFFFVVGMEIKRELAVGELRTLRQALLPLVAALGGMAVPAAIFLAFNAGTPAAAGWGVPMATDIAFCVGVLTLLKARVPHALVVFVTALAIFDDIGGILVIALFYGHGLQLTWLAAAGGLTAALALMSRSYVRSLAAYALVTAALWYALHHGGIHATIAGVIAGLAIPARARVSPRAVLRGVADHTAELLRAAEDEDLDSAAVLELEERIEDVESPLGRFVHALHPWVAFAIMPVFALANSGVDLRALEPAQLVGRLAVGTALALFAGKLVGIFCCTWIAVRSGLAPMPGGASAAKLIGVSAVAGIGFTVALFIAGLAYGGGTQLLDEAKVGILAGSLVSGVVGALVLRLTPRVSSRSPAPELSVASAS.

11 consecutive transmembrane segments (helical) span residues 33-53 (ASGI…NSPL), 76-96 (FSLA…VVGM), 114-134 (LLPL…FLAF), 142-162 (AGWG…LTLL), 172-192 (VFVT…IALF), 196-216 (GLQL…ALMS), 235-255 (YALH…GLAI), 308-328 (FVHA…ALAN), 349-369 (TALA…WIAV), 385-405 (LIGV…IAGL), and 419-439 (VGIL…LRLT).

The protein belongs to the NhaA Na(+)/H(+) (TC 2.A.33) antiporter family.

Its subcellular location is the cell inner membrane. It carries out the reaction Na(+)(in) + 2 H(+)(out) = Na(+)(out) + 2 H(+)(in). Its function is as follows. Na(+)/H(+) antiporter that extrudes sodium in exchange for external protons. In Anaeromyxobacter sp. (strain Fw109-5), this protein is Na(+)/H(+) antiporter NhaA.